We begin with the raw amino-acid sequence, 679 residues long: Protein hook (679 aa).

The 118-residue stretch at 6–123 folds into the Calponin-homology (CH) domain; sequence NEMYYSLLEW…RLLQLVLGCA (118 aa). Coiled-coil stretches lie at residues 135–437 and 480–574; these read EIMC…LKCG and QTAL…QEIL.

The protein belongs to the hook family. As to quaternary structure, homodimer. Interacts with microtubules via its N-terminus.

It is found in the cytoplasm. The protein resides in the cytoskeleton. It localises to the endosome. Its subcellular location is the synapse. In terms of biological role, involved in endocytic trafficking by stabilizing organelles of the endocytic pathway. Probably acts as a cytoskeletal linker protein required to tether endosome vesicles to the cytoskeleton. Involved in modulation of endocytosis at stages required for down-regulation of membrane proteins that control synapse size. Not involved in synaptic vesicle recycling. Required in R7 cells for boss endocytosis into multivesicular bodies (MVBs). Has a role in regulating adult longevity. This Drosophila simulans (Fruit fly) protein is Protein hook.